The primary structure comprises 371 residues: Protein MxiG (371 aa).

The helical transmembrane segment at 127-141 (VFFFFAVIVVLIIIF) threads the bilayer.

It is found in the cell inner membrane. Its subcellular location is the cell outer membrane. In terms of biological role, involved in the secretion of the Ipa antigens. Involved in the intracellular dissemination of Shigella. Part of the Mxi-Spa secretion apparatus. In Shigella flexneri, this protein is Protein MxiG (mxiG).